Reading from the N-terminus, the 220-residue chain is MTQDELKALVGQAAVAYVPDGSVVGVGTGSTVNCFIDALAAIKDRIAGAVSSSVRSTERLQALGIPVLDLSQVERIPVYIDGADEIDPRGHMIKGGGAALTREKIVADLAERFVCIADASKRVDVMGRFPLPVEVIPMAAAQVARRFGAAYGGLARVREGVVTDNGNLILDVTGLHIADPLAMETEVNQWPGVVCVGIFARHKAAVCLLGTPEGVRTLNF.

Substrate contacts are provided by residues 28-31, 81-84, and 94-97; these read TGST, DGAD, and KGGG. The Proton acceptor role is filled by Glu103. Lys121 is a substrate binding site.

The protein belongs to the ribose 5-phosphate isomerase family. In terms of assembly, homodimer.

It catalyses the reaction aldehydo-D-ribose 5-phosphate = D-ribulose 5-phosphate. The protein operates within carbohydrate degradation; pentose phosphate pathway; D-ribose 5-phosphate from D-ribulose 5-phosphate (non-oxidative stage): step 1/1. Its function is as follows. Catalyzes the reversible conversion of ribose-5-phosphate to ribulose 5-phosphate. In Leptothrix cholodnii (strain ATCC 51168 / LMG 8142 / SP-6) (Leptothrix discophora (strain SP-6)), this protein is Ribose-5-phosphate isomerase A.